The primary structure comprises 110 residues: Glutaredoxin-1 (110 aa).

The region spanning 7-110 (IKHVKDLIAE…EELLEPILAN (104 aa)) is the Glutaredoxin domain. A Glycyl lysine isopeptide (Lys-Gly) (interchain with G-Cter in ubiquitin) cross-link involves residue Lys-11. Glutathione-binding positions include 24–29 (KTYCPY), Gln-63, Val-75, and 88–89 (ND). S-glutathionyl cysteine; alternate is present on Cys-27. Cysteines 27 and 30 form a disulfide.

Belongs to the glutaredoxin family.

Its subcellular location is the cytoplasm. It is found in the nucleus. It catalyses the reaction 2 glutathione + H2O2 = glutathione disulfide + 2 H2O. The catalysed reaction is 1-chloro-2,4-dinitrobenzene + glutathione = 2,4-dinitrophenyl-S-glutathione + chloride + H(+). The enzyme catalyses RX + glutathione = an S-substituted glutathione + a halide anion + H(+). Functionally, component of the glutathione system which performs several activities such as glutathione-dependent oxidoreductase, glutathione peroxidase and glutathione S-transferase (GST) activity. The disulfide bond functions as an electron carrier in the glutathione-dependent synthesis of deoxyribonucleotides by the enzyme ribonucleotide reductase. In addition, it is also involved in reducing cytosolic protein- and non-protein-disulfides in a coupled system with glutathione reductase. Required for resistance to reactive oxygen species (ROS) by directly reducing hydroperoxides and for the detoxification of ROS-mediated damage. GRX1 is less active as an oxidoreductase than GRX2. The sequence is that of Glutaredoxin-1 (GRX1) from Saccharomyces cerevisiae (strain ATCC 204508 / S288c) (Baker's yeast).